The sequence spans 337 residues: Oligopeptide transport ATP-binding protein OppD (337 aa).

One can recognise an ABC transporter domain in the interval 20-269 (LNVKDLRVTF…PVHPYSIGLL (250 aa)). Residue 56 to 63 (GESGSGKS) participates in ATP binding.

The protein belongs to the ABC transporter superfamily. The complex is composed of two ATP-binding proteins (OppD and OppF), two transmembrane proteins (OppB and OppC) and a solute-binding protein (OppA or MppA).

Its subcellular location is the cell inner membrane. The catalysed reaction is a [peptide](out) + ATP + H2O = a [peptide](in) + ADP + phosphate + H(+). It catalyses the reaction L-alanyl-gamma-D-glutamyl-meso-2,6-diaminopimelate(out) + ATP + H2O = L-alanyl-gamma-D-glutamyl-meso-2,6-diaminopimelate(in) + ADP + phosphate + H(+). In terms of biological role, part of the ABC transporter complex OppABCDF involved in the uptake of oligopeptides and of the ABC transporter complex MppA-OppBCDF involved in the uptake of the cell wall murein tripeptide L-alanyl-gamma-D-glutamyl-meso-diaminopimelate. Probably responsible for energy coupling to the transport system. Plays an important nutritional role and is involved in the recycling of cell wall peptides. This is Oligopeptide transport ATP-binding protein OppD (oppD) from Escherichia coli (strain K12).